Here is a 741-residue protein sequence, read N- to C-terminus: MLKKIVTALGMSGMLLASSNAIAEDTTTKNDNLSPQSVDLSPLRNLNKLDSPMDKDYNYHQAFKKLDTEQLKKDMQDLLTQSQDWWPADFGNYGPFFIRLSWHDAGTYRIYDGRGGANRGQQRFSPLNSWPDNVNLDKARQLLWPIKQKYGDAVSWSDLIVLAGTVSLESMGMKPIGFAFGREDDWQGDDTNWGLSPEEIMSSNVRDGKLAPAYAATQMGLIYVNPEGPDGKPDIKGAASEIRQAFRAMGMTDKETVALIAGGHTFGKTHGAVPEDKVKQTIGPAPDKAPIEQQGLGWHNSYGTGNGDDTMGSGLEGSWTSTPTFWNHDFLHNLYNLDWKKTLSPAGAHQWTPTNAKPENMVPDAHKPGVKHKPIMFTTDLALKEDDGFNKYTQEFYNNPEEFKEEFAKAWFKLTHRDMGPKSRYIGPWIPEQNFIWQDPVPAADYKQVSTQDIAQLEQDIINSGLTNQQLIKTAWDSASTYRKTDYRGGSNGARIALAPEKDWQMNEPAKLEVVLTKLKEIQTNFNNSKTDGTKVSLADLIVLGGNVGVEQAAKQAGYNIQMPFVPGRTDATQAQTDIESFNYLKTKSDGFINYTDGSVSADKLPQTLVEKASMLDLNIPEMTVLVGGMRALDVNYDNSQEGVLTTTPGQLNNSFFVNLLDMSTQWKKSDKKDGEYIGIDRKTGKQKWTASPVDLIFGSNSELKAVAQVYAENGNEQKFVNDFAKAWHKVMMLGRFDVQQ.

Positions 1 to 23 (MLKKIVTALGMSGMLLASSNAIA) are cleaved as a signal peptide. Positions 102-223 (WHDAGTYRIY…YAATQMGLIY (122 aa)) form a cross-link, tryptophyl-tyrosyl-methioninium (Trp-Tyr) (with M-249). Histidine 103 (proton acceptor) is an active-site residue. Positions 223 to 249 (YVNPEGPDGKPDIKGAASEIRQAFRAM) form a cross-link, tryptophyl-tyrosyl-methioninium (Tyr-Met) (with W-102). Residue histidine 264 coordinates heme b.

Belongs to the peroxidase family. Peroxidase/catalase subfamily. In terms of assembly, homodimer or homotetramer. Requires heme b as cofactor. Formation of the three residue Trp-Tyr-Met cross-link is important for the catalase, but not the peroxidase activity of the enzyme.

The catalysed reaction is H2O2 + AH2 = A + 2 H2O. It catalyses the reaction 2 H2O2 = O2 + 2 H2O. In terms of biological role, bifunctional enzyme with both catalase and broad-spectrum peroxidase activity. This is Catalase-peroxidase from Francisella tularensis subsp. tularensis (strain WY96-3418).